Here is a 98-residue protein sequence, read N- to C-terminus: Ribonuclease kappa (98 aa).

The next 2 helical transmembrane spans lie at 13-33 (ACGI…GIFF) and 65-85 (VSYN…FSFC).

The protein belongs to the RNase K family. As to quaternary structure, interacts with the proton translocation complex V0 of the V-ATPase. Interacts with ATP6AP1. As to expression, expressed in brain (at protein level).

Its subcellular location is the endomembrane system. The protein localises to the cytoplasmic vesicle. The protein resides in the clathrin-coated vesicle membrane. Its function is as follows. Endoribonuclease which preferentially cleaves ApU and ApG phosphodiester bonds. Hydrolyzes UpU bonds at a lower rate. Regulates the activity of vacuolar (H+)-ATPase (V-ATPase) which is responsible for acidifying and maintaining the pH of intracellular compartments. Required at an early stage of receptor-mediated endocytosis. This chain is Ribonuclease kappa (RNASEK), found in Bos taurus (Bovine).